The chain runs to 71 residues: Sec-independent protein translocase protein TatA (71 aa).

A helical transmembrane segment spans residues 1 to 21; that stretch reads MGASPVQLLIVLFIAVLVFGG.

It belongs to the TatA/E family. As to quaternary structure, the Tat system comprises two distinct complexes: a TatABC complex, containing multiple copies of TatA, TatB and TatC subunits, and a separate TatA complex, containing only TatA subunits. Substrates initially bind to the TatABC complex, which probably triggers association of the separate TatA complex to form the active translocon.

It localises to the cell inner membrane. In terms of biological role, part of the twin-arginine translocation (Tat) system that transports large folded proteins containing a characteristic twin-arginine motif in their signal peptide across membranes. TatA could form the protein-conducting channel of the Tat system. The chain is Sec-independent protein translocase protein TatA from Dichelobacter nodosus (strain VCS1703A).